Reading from the N-terminus, the 663-residue chain is DNA topoisomerase 4 subunit B (663 aa).

Residues Tyr-21, Asn-61, Asp-88, 130-136, and Lys-360 contribute to the ATP site; that span reads GLHGVGI. The region spanning 440 to 554 is the Toprim domain; that stretch reads TELFIVEGDS…EGHLYLAKPP (115 aa). The Mg(2+) site is built by Glu-446, Asp-519, and Asp-521.

The protein belongs to the type II topoisomerase family. ParE type 1 subfamily. Heterotetramer composed of ParC and ParE. Mg(2+) serves as cofactor. Requires Mn(2+) as cofactor. The cofactor is Ca(2+).

The catalysed reaction is ATP-dependent breakage, passage and rejoining of double-stranded DNA.. Topoisomerase IV is essential for chromosome segregation. It relaxes supercoiled DNA. Performs the decatenation events required during the replication of a circular DNA molecule. This is DNA topoisomerase 4 subunit B from Rickettsia typhi (strain ATCC VR-144 / Wilmington).